The chain runs to 358 residues: Alanine racemase (358 aa).

Lys-35 (proton acceptor; specific for D-alanine) is an active-site residue. Lys-35 bears the N6-(pyridoxal phosphate)lysine mark. Arg-130 serves as a coordination point for substrate. The active-site Proton acceptor; specific for L-alanine is the Tyr-255. Met-303 lines the substrate pocket.

This sequence belongs to the alanine racemase family. Requires pyridoxal 5'-phosphate as cofactor.

The catalysed reaction is L-alanine = D-alanine. Its pathway is amino-acid biosynthesis; D-alanine biosynthesis; D-alanine from L-alanine: step 1/1. In terms of biological role, catalyzes the interconversion of L-alanine and D-alanine. May also act on other amino acids. The chain is Alanine racemase (alr) from Shewanella piezotolerans (strain WP3 / JCM 13877).